The sequence spans 945 residues: Isoleucine--tRNA ligase 1 (945 aa).

The 'HIGH' region motif lies at 66–76; that stretch reads PYANGDIHLGH. An L-isoleucyl-5'-AMP-binding site is contributed by Glu-581. A 'KMSKS' region motif is present at residues 622-626; that stretch reads KMSKS. An ATP-binding site is contributed by Lys-625. Residues Cys-908, Cys-911, Cys-928, and Cys-931 each coordinate Zn(2+).

The protein belongs to the class-I aminoacyl-tRNA synthetase family. IleS type 1 subfamily. As to quaternary structure, monomer. Zn(2+) is required as a cofactor.

It is found in the cytoplasm. It carries out the reaction tRNA(Ile) + L-isoleucine + ATP = L-isoleucyl-tRNA(Ile) + AMP + diphosphate. Its function is as follows. Catalyzes the attachment of isoleucine to tRNA(Ile). As IleRS can inadvertently accommodate and process structurally similar amino acids such as valine, to avoid such errors it has two additional distinct tRNA(Ile)-dependent editing activities. One activity is designated as 'pretransfer' editing and involves the hydrolysis of activated Val-AMP. The other activity is designated 'posttransfer' editing and involves deacylation of mischarged Val-tRNA(Ile). The protein is Isoleucine--tRNA ligase 1 of Burkholderia pseudomallei (strain K96243).